The primary structure comprises 342 residues: Alpha-(1,3)-fucosyltransferase 7 (342 aa).

Topologically, residues 1-14 are cytoplasmic; sequence MNNAGHGPTRRLRG. A helical; Signal-anchor for type II membrane protein transmembrane segment spans residues 15–36; the sequence is LGVLAGVALLAALWLLWLLGSA. At 37 to 342 the chain is on the lumenal side; that stretch reads PRGTPAPQPT…YEDLEGWFQA (306 aa). Cysteine 68 and cysteine 76 are joined by a disulfide. The N-linked (GlcNAc...) asparagine glycan is linked to asparagine 81. A disulfide bond links cysteine 211 and cysteine 214. Asparagine 291 is a glycosylation site (N-linked (GlcNAc...) asparagine). Cysteines 318 and 321 form a disulfide.

The protein belongs to the glycosyltransferase 10 family. Post-translationally, N-glycosylated. In terms of tissue distribution, leukocytic/myeloid lineage cells.

Its subcellular location is the golgi apparatus. The protein resides in the golgi stack membrane. It carries out the reaction an N-acetyl-alpha-neuraminyl-(2-&gt;3)-beta-D-galactosyl-(1-&gt;4)-N-acetyl-beta-D-glucosaminyl derivative + GDP-beta-L-fucose = an alpha-Neu5Ac-(2-&gt;3)-beta-D-Gal-(1-&gt;4)-[alpha-L-Fuc-(1-&gt;3)]-beta-D-GlcNAc derivative + GDP + H(+). The catalysed reaction is a neolactoside IV(3)-alpha-NeuAc-nLc4Cer + GDP-beta-L-fucose = a neolactoside IV(3)-alpha-NeuNAc,III(3)-alpha-Fuc-nLc4Cer + GDP + H(+). The enzyme catalyses a neolactoside VI(3)-alpha-NeuNAc-nLc6Cer + GDP-beta-L-fucose = a neolactoside VI(3)-alpha-NeuAc,V(3)-alphaFuc-nLc6Cer + GDP + H(+). It catalyses the reaction an alpha-Neu5Ac-(2-&gt;3)-beta-D-Gal-(1-&gt;4)-beta-D-GlcNAc-(1-&gt;3)-beta-D-Gal-(1-&gt;4)-[alpha-L-Fuc-(1-&gt;3)]-beta-D-GlcNAc derivative + GDP-beta-L-fucose = an alpha-Neu5Ac-(2-&gt;3)-beta-D-Gal-(1-&gt;4)-[alpha-L-Fuc-(1-&gt;3)]-beta-D-GlcNAc-(1-&gt;3)-beta-D-Gal-(1-&gt;4)-[alpha-L-Fuc-(1-&gt;3)]-beta-D-GlcNAc derivative + GDP + H(+). It carries out the reaction an alpha-Neu5Ac-(2-&gt;3)-beta-D-Gal-(1-&gt;4)-beta-D-GlcNAc6S derivative + GDP-beta-L-fucose = an alpha-Neu5Ac-(2-&gt;3)-beta-D-Gal-(1-&gt;4)-[alpha-L-Fuc-(1-&gt;3)]-beta-D-GlcNAc6S derivative + GDP + H(+). The catalysed reaction is alpha-Neu5Ac-(2-&gt;3)-beta-D-Gal-(1-&gt;4)-beta-D-GlcNAc-(1-&gt;3)-beta-D-Gal-(1-&gt;4)-D-Glc + GDP-beta-L-fucose = alpha-Neu5Ac-(2-&gt;3)-beta-D-Gal-(1-&gt;4)-[alpha-L-Fuc-(1-&gt;3)]-beta-D-GlcNAc-(1-&gt;3)-beta-D-Gal-(1-&gt;4)-D-Glc + GDP + H(+). The enzyme catalyses alpha-Neu5Ac-(2-&gt;3)-beta-D-Gal-(1-&gt;4)-beta-D-GlcNAc-(1-&gt;3)-beta-D-Gal-(1-&gt;4)-[alpha-L-Fuc-(1-&gt;3)]-beta-D-GlcNAc-(1-&gt;3)-beta-D-Gal-(1-&gt;4)-beta-D-GlcNAc + GDP-beta-L-fucose = alpha-Neu5Ac-(2-&gt;3)-beta-D-Gal-(1-&gt;4)-[alpha-L-Fuc-(1-&gt;3)]-beta-D-GlcNAc-(1-&gt;3)-beta-D-Gal-(1-&gt;4)-[alpha-L-Fuc-(1-&gt;3)]-beta-D-GlcNAc-(1-&gt;3)-beta-D-Gal-(1-&gt;4)-beta-D-GlcNAc + GDP + H(+). It catalyses the reaction alpha-Neu5Ac-(2-&gt;3)-beta-D-Gal-(1-&gt;4)-beta-D-GlcNAc-(1-&gt;3)-beta-D-Gal-(1-&gt;4)-beta-D-GlcNAc-(1-&gt;3)-beta-D-Gal-(1-&gt;4)-beta-D-GlcNAc + GDP-beta-L-fucose = alpha-Neu5Ac-(2-&gt;3)-beta-D-Gal-(1-&gt;4)-[alpha-L-Fuc-(1-&gt;3)]-beta-D-GlcNAc-(1-&gt;3)-beta-D-Gal-(1-&gt;4)-beta-D-GlcNAc-(1-&gt;3)-beta-D-Gal-(1-&gt;4)-beta-D-GlcNAc + GDP + H(+). Its pathway is protein modification; protein glycosylation. Its activity is regulated as follows. Inhibited by NaCl. Inhibited by GDP in a concentration dependent manner, with an IC(50) value of 93 uM. Also inhibited by GMP and GTP. Inhibited by N-ethylmaleimide. Activated by poly(ethylene glycol) by enhancing the thermal stability of FUT7. Activated by Mn2+, Ca2+, and Mg2+. Both panosialin A and B inhibit activity with IC(50) values of 4.8 and 5.3 ug/ml, respectively. Inhibited by gallic acid (GA) and (-)-epigallocatechin gallate (EGCG) in a time-dependent and irreversible manner with IC(50) values of 60 and 700 nM, respectively. Catalyzes the transfer of L-fucose, from a guanosine diphosphate-beta-L-fucose, to the N-acetyl glucosamine (GlcNAc) of a distal alpha2,3 sialylated lactosamine unit of a glycoprotein or a glycolipid-linked sialopolylactosamines chain through an alpha-1,3 glycosidic linkage and participates in the final fucosylation step in the biosynthesis of the sialyl Lewis X (sLe(x)), a carbohydrate involved in cell and matrix adhesion during leukocyte trafficking and fertilization. In vitro, also synthesizes sialyl-dimeric-Lex structures, from VIM-2 structures and both di-fucosylated and trifucosylated structures from mono-fucosylated precursors. However does not catalyze alpha 1-3 fucosylation when an internal alpha 1-3 fucosylation is present in polylactosamine chain and the fucosylation rate of the internal GlcNAc residues is reduced once fucose has been added to the distal GlcNAc. Also catalyzes the transfer of a fucose from GDP-beta-fucose to the 6-sulfated a(2,3)sialylated substrate to produce 6-sulfo sLex mediating significant L-selectin-dependent cell adhesion. Through sialyl-Lewis(x) biosynthesis, can control SELE- and SELP-mediated cell adhesion with leukocytes and allows leukocytes tethering and rolling along the endothelial tissue thereby enabling the leukocytes to accumulate at a site of inflammation. May enhance embryo implantation through sialyl Lewis X (sLeX)-mediated adhesion of embryo cells to endometrium. May affect insulin signaling by up-regulating the phosphorylation and expression of some signaling molecules involved in the insulin-signaling pathway through SLe(x) which is present on the glycans of the INSRR alpha subunit. The sequence is that of Alpha-(1,3)-fucosyltransferase 7 from Homo sapiens (Human).